Consider the following 395-residue polypeptide: Immunoglobulin heavy constant gamma 2 (395 aa).

Positions 1-98 (ASTKGPSVFP…PSNTKVDKTV (98 aa)) are CH1. Residues 1-346 (ASTKGPSVFP…DGELDGLWTT (346 aa)) lie on the Extracellular side of the membrane. Ig-like domains are found at residues 6-99 (PSVF…KTVE), 117-216 (PSVF…KTIS), and 225-321 (PQVY…KSLS). A disulfide bridge connects residues cysteine 27 and cysteine 83. The segment at 99–110 (ERKCCVECPPCP) is hinge. Positions 111–219 (APPVAGPSVF…PIEKTISKTK (109 aa)) are CH2. Intrachain disulfides connect cysteine 140–cysteine 200 and cysteine 246–cysteine 304. The N-linked (GlcNAc...) (complex) asparagine glycan is linked to asparagine 176. Positions 220–326 (GQPREPQVYT…QKSLSLSPEL (107 aa)) are CH3. A helical transmembrane segment spans residues 347 to 367 (ITIFITLFLLSVCYSATITFF). Residues 368–395 (KVKWIFSSVVDLKQTIVPDYRNMIRQGA) lie on the Cytoplasmic side of the membrane.

As to quaternary structure, immunoglobulins are composed of two identical heavy chains and two identical light chains; disulfide-linked. Post-translationally, glycosylation on Asn-176 is required for interaction with Fc receptors and ability to activate the complement pathway. (Microbial infection) Deglycosylation on Asn-176 by S.pyogenes EndoS or Endos2 endoglucosidases prevents interaction between immunoglobulin-gamma (IgG) and Fc receptors, impairing ability to activate the complement pathway.

The protein localises to the secreted. It is found in the cell membrane. Constant region of immunoglobulin heavy chains. Immunoglobulins, also known as antibodies, are membrane-bound or secreted glycoproteins produced by B lymphocytes. In the recognition phase of humoral immunity, the membrane-bound immunoglobulins serve as receptors which, upon binding of a specific antigen, trigger the clonal expansion and differentiation of B lymphocytes into immunoglobulins-secreting plasma cells. Secreted immunoglobulins mediate the effector phase of humoral immunity, which results in the elimination of bound antigens. The antigen binding site is formed by the variable domain of one heavy chain, together with that of its associated light chain. Thus, each immunoglobulin has two antigen binding sites with remarkable affinity for a particular antigen. The variable domains are assembled by a process called V-(D)-J rearrangement and can then be subjected to somatic hypermutations which, after exposure to antigen and selection, allow affinity maturation for a particular antigen. The polypeptide is Immunoglobulin heavy constant gamma 2 (Homo sapiens (Human)).